The primary structure comprises 250 residues: MFLQNKNVVVMGVANKKSIAWGCAKALKDQGANVIYTYQNERMKKQVVKLADENDLLVECDVASDASIQAAFETIKNEVGTIDGLVHAIAFAKKEELSGNVSDITRDGFLLAQDISSYSLLAVTHYAKPLLNPGSGIVTLTYLGSERAIPNYNMMGIAKASLETAVKYLAFELAADKIRVNGISAGAIKTLAVTGVKDYDQLISISNERTPDKTGVTIEEVGNTCAFLVSDLASGVVGDIIYVDKGVHLT.

NAD(+) contacts are provided by residues glycine 12, serine 18–isoleucine 19, glutamine 39, aspartate 61–valine 62, and isoleucine 89. Substrate is bound at residue alanine 92. Active-site proton acceptor residues include tyrosine 142 and tyrosine 152. NAD(+) is bound by residues lysine 159 and isoleucine 188–alanine 192.

The protein belongs to the short-chain dehydrogenases/reductases (SDR) family. FabI subfamily. In terms of assembly, homotetramer.

It catalyses the reaction a 2,3-saturated acyl-[ACP] + NAD(+) = a (2E)-enoyl-[ACP] + NADH + H(+). Its pathway is lipid metabolism; fatty acid biosynthesis. With respect to regulation, inhibited by triclosan and its diphenyl ether analgues. Functionally, catalyzes the reduction of a carbon-carbon double bond in an enoyl moiety that is covalently linked to an acyl carrier protein (ACP). Involved in the elongation cycle of fatty acid which are used in the lipid metabolism. The sequence is that of Enoyl-[acyl-carrier-protein] reductase [NADH] FabI (fabI) from Enterococcus faecalis (strain ATCC 700802 / V583).